The sequence spans 705 residues: Polyribonucleotide nucleotidyltransferase (705 aa).

Positions 486 and 492 each coordinate Mg(2+). The region spanning 553-612 is the KH domain; the sequence is PRIIKFKINPEKIRDVIGKGGAVIRALTEETGTTIDISDDGSVTIASISNEGGEQAKRRI. The S1 motif domain maps to 622–690; that stretch reads GKIYEGTVLK…DKGRLRLSMK (69 aa).

It belongs to the polyribonucleotide nucleotidyltransferase family. Mg(2+) serves as cofactor.

It localises to the cytoplasm. The enzyme catalyses RNA(n+1) + phosphate = RNA(n) + a ribonucleoside 5'-diphosphate. Its function is as follows. Involved in mRNA degradation. Catalyzes the phosphorolysis of single-stranded polyribonucleotides processively in the 3'- to 5'-direction. This is Polyribonucleotide nucleotidyltransferase from Nitrosomonas eutropha (strain DSM 101675 / C91 / Nm57).